A 557-amino-acid chain; its full sequence is Formate--tetrahydrofolate ligase (557 aa).

Position 65 to 72 (65 to 72 (TPAGEGKT)) interacts with ATP.

It belongs to the formate--tetrahydrofolate ligase family.

The enzyme catalyses (6S)-5,6,7,8-tetrahydrofolate + formate + ATP = (6R)-10-formyltetrahydrofolate + ADP + phosphate. It functions in the pathway one-carbon metabolism; tetrahydrofolate interconversion. The protein is Formate--tetrahydrofolate ligase of Acidiphilium cryptum (strain JF-5).